The following is a 452-amino-acid chain: Chromosomal replication initiator protein DnaA (452 aa).

The tract at residues 1-73 is domain I, interacts with DnaA modulators; sequence MSPNSTLWQT…NELATKYSST (73 aa). The interval 73–102 is domain II; the sequence is TPVRLKFVSQEEVIEEPVADRKLTIDYRQG. A domain III, AAA+ region region spans residues 103–323; that stretch reads NLNSTYTFDS…GALIRLISYA (221 aa). ATP-binding residues include Gly-147, Gly-149, Lys-150, and Thr-151. Residues 324 to 452 are domain IV, binds dsDNA; it reads QTFNLEITMN…VKKIDSPLLK (129 aa).

It belongs to the DnaA family. Oligomerizes as a right-handed, spiral filament on DNA at oriC.

It localises to the cytoplasm. Functionally, plays an essential role in the initiation and regulation of chromosomal replication. ATP-DnaA binds to the origin of replication (oriC) to initiate formation of the DNA replication initiation complex once per cell cycle. Binds the DnaA box (a 9 base pair repeat at the origin) and separates the double-stranded (ds)DNA. Forms a right-handed helical filament on oriC DNA; dsDNA binds to the exterior of the filament while single-stranded (ss)DNA is stabiized in the filament's interior. The ATP-DnaA-oriC complex binds and stabilizes one strand of the AT-rich DNA unwinding element (DUE), permitting loading of DNA polymerase. After initiation quickly degrades to an ADP-DnaA complex that is not apt for DNA replication. Binds acidic phospholipids. The chain is Chromosomal replication initiator protein DnaA from Acholeplasma laidlawii (strain PG-8A).